The primary structure comprises 404 residues: Zinc finger TRAF-type-containing protein 1 (404 aa).

Positions Met-1–Ala-13 are enriched in gly residues. The disordered stretch occupies residues Met-1–Ala-22. The RING-type; degenerate zinc finger occupies Cys-111 to Arg-156. The segment at Cys-152–Thr-225 adopts a TRAF-type zinc-finger fold.

This sequence belongs to the ZFTRAF1 family. In terms of assembly, interacts with LGALS3.

It is found in the cytoplasm. The protein localises to the perinuclear region. This chain is Zinc finger TRAF-type-containing protein 1, found in Homo sapiens (Human).